We begin with the raw amino-acid sequence, 446 residues long: ATP-dependent protease ATPase subunit HslU (446 aa).

Residues isoleucine 18, 60 to 65 (GVGKTE), aspartate 259, glutamate 324, and arginine 396 each bind ATP.

It belongs to the ClpX chaperone family. HslU subfamily. A double ring-shaped homohexamer of HslV is capped on each side by a ring-shaped HslU homohexamer. The assembly of the HslU/HslV complex is dependent on binding of ATP.

It localises to the cytoplasm. In terms of biological role, ATPase subunit of a proteasome-like degradation complex; this subunit has chaperone activity. The binding of ATP and its subsequent hydrolysis by HslU are essential for unfolding of protein substrates subsequently hydrolyzed by HslV. HslU recognizes the N-terminal part of its protein substrates and unfolds these before they are guided to HslV for hydrolysis. This is ATP-dependent protease ATPase subunit HslU from Vibrio atlanticus (strain LGP32) (Vibrio splendidus (strain Mel32)).